Consider the following 458-residue polypeptide: Pyruvate kinase (458 aa).

R33 lines the substrate pocket. K(+) contacts are provided by N35, S37, and D67. 35–38 (NASH) serves as a coordination point for ATP. 2 residues coordinate ATP: R74 and K148. A Mg(2+)-binding site is contributed by E214. 3 residues coordinate substrate: G237, D238, and T270. D238 contributes to the Mg(2+) binding site.

The protein belongs to the pyruvate kinase family. In terms of assembly, homotetramer. It depends on a divalent metal cation as a cofactor.

It catalyses the reaction pyruvate + ATP = phosphoenolpyruvate + ADP + H(+). Its pathway is carbohydrate degradation; glycolysis; pyruvate from D-glyceraldehyde 3-phosphate: step 5/5. Its activity is regulated as follows. Not activated by classical allosteric effectors. The sequence is that of Pyruvate kinase (pyk) from Aeropyrum pernix (strain ATCC 700893 / DSM 11879 / JCM 9820 / NBRC 100138 / K1).